The primary structure comprises 408 residues: S-adenosylmethionine synthase (408 aa).

140–145 serves as a coordination point for ATP; sequence GQGSVD.

Belongs to the AdoMet synthase 2 family. It depends on Mg(2+) as a cofactor.

The enzyme catalyses L-methionine + ATP + H2O = S-adenosyl-L-methionine + phosphate + diphosphate. The protein operates within amino-acid biosynthesis; S-adenosyl-L-methionine biosynthesis; S-adenosyl-L-methionine from L-methionine: step 1/1. Functionally, catalyzes the formation of S-adenosylmethionine from methionine and ATP. The sequence is that of S-adenosylmethionine synthase from Caldivirga maquilingensis (strain ATCC 700844 / DSM 13496 / JCM 10307 / IC-167).